A 480-amino-acid chain; its full sequence is Zinc finger protein ztf-16 (480 aa).

The C2H2-type 1 zinc finger occupies 5–27 (NACTECGFTTTVFSEFQGHIEKH). The segment at 25–75 (EKHENEHSRSSSGEMSNSQTIEWGDGIQSSTPSPRSTPPSDPTPSPDSDEH) is disordered. A compositionally biased stretch (polar residues) spans 34–45 (SSSGEMSNSQTI). Over residues 59–69 (RSTPPSDPTPS) the composition is skewed to pro residues. 5 C2H2-type zinc fingers span residues 103 to 125 (HVCP…LEAH), 133 to 155 (YQCD…RMRH), 161 to 183 (YECR…SMTH), 190 to 215 (FDCP…EETH), and 223 to 246 (ASCK…QTRH). 3 disordered regions span residues 243–275 (QTRH…MDPA), 290–311 (EFSP…DKIP), and 376–417 (TSSS…KEDE). A compositionally biased stretch (basic and acidic residues) spans 244 to 259 (TRHDDSESSPKKENTP). Low complexity-rich tracts occupy residues 292–305 (SPPN…STSS) and 376–403 (TSSS…SLSL). Over residues 404–413 (TEKEKSPTPE) the composition is skewed to basic and acidic residues. C2H2-type zinc fingers lie at residues 420 to 442 (VECC…KSLH) and 448 to 472 (FKCA…FADH).

Belongs to the Ikaros C2H2-type zinc-finger protein family. As to expression, expressed in the somatic gonad, hypodermis and cells in the head and tail. Expressed in amphid and phasmid sheath glia, amphid and phasmid socket glia, and in neurons in the head.

It localises to the nucleus. Positively regulates the expression of ver-1 in the amphid sheath glia of amphid sensory neurons. Together with ehn-3, plays a role in somatic gonad development and is required for proper gonadal primordium assembly and somatic gonad precursor cell morphology. The sequence is that of Zinc finger protein ztf-16 from Caenorhabditis elegans.